The following is a 156-amino-acid chain: Large ribosomal subunit protein uL15 (156 aa).

Residues 25–48 (RGIGCGKGKTSGRGHKGQKARSGV) are disordered. The span at 34-43 (TSGRGHKGQK) shows a compositional bias: basic residues.

Belongs to the universal ribosomal protein uL15 family. Part of the 50S ribosomal subunit.

In terms of biological role, binds to the 23S rRNA. The polypeptide is Large ribosomal subunit protein uL15 (Wolbachia pipientis wMel).